The following is a 607-amino-acid chain: Actin-related protein 5 (607 aa).

Lysine 283 participates in a covalent cross-link: Glycyl lysine isopeptide (Lys-Gly) (interchain with G-Cter in SUMO2). Coiled-coil stretches lie at residues 288–327 and 355–384; these read TLTS…LDRL and EELQ…NLEV. Residues 584 to 596 show a composition bias toward low complexity; it reads SRSSDAQASSKGS. The tract at residues 584-607 is disordered; that stretch reads SRSSDAQASSKGSAAGGGGAGEQA. Residues 597 to 607 show a composition bias toward gly residues; that stretch reads AAGGGGAGEQA.

The protein belongs to the actin family. ARP5 subfamily. In terms of assembly, component of the chromatin remodeling INO80 complex; specifically part of a complex module associated with the helicase ATP-binding and the helicase C-terminal domain of INO80. Interacts with DDB1. Interacts with ACTR8; the interaction is observed in asynchronous (interphase) cells but not in metaphase-arrested cells indicative for a possible dissociation of the INO80 complex in mitotic cells.

The protein localises to the nucleus. It localises to the cytoplasm. Proposed core component of the chromatin remodeling INO80 complex which is involved in transcriptional regulation, DNA replication and probably DNA repair. Involved in DNA double-strand break repair and UV-damage excision repair. In Homo sapiens (Human), this protein is Actin-related protein 5 (ACTR5).